We begin with the raw amino-acid sequence, 419 residues long: Chaperone protein dnaJ 2 (419 aa).

In terms of domain architecture, J spans 14-75 (KFYEILGVPK…EKREIYDQYG (62 aa)). The segment at 136-220 (GTTKKLSLSR…CKGEKVVSEK (85 aa)) adopts a CR-type zinc-finger fold. Residues Cys149, Cys152, Cys165, Cys168, Cys192, Cys195, Cys208, and Cys211 each contribute to the Zn(2+) site. CXXCXGXG motif repeat units lie at residues 149–156 (CSKCNGKG), 165–172 (CGGCQGSG), 192–199 (CNDCKGTG), and 208–215 (CPQCKGEK). A compositionally biased stretch (basic and acidic residues) spans 378–391 (TTLHDVNIEDEMKR). Positions 378 to 419 (TTLHDVNIEDEMKRKAQAQREAYDDDEEDHPGGAQRVQCAQQ) are disordered. Cys416 bears the Cysteine methyl ester mark. Cys416 carries S-farnesyl cysteine lipidation. The propeptide at 417-419 (AQQ) is removed in mature form.

Belongs to the DnaJ family. A/I subfamily. Homodimer. Requires Zn(2+) as cofactor. Post-translationally, farnesylated. As to expression, expressed in both etiolated and light-grown tissues.

It is found in the membrane. In terms of biological role, plays a continuous role in plant development probably in the structural organization of compartments. The polypeptide is Chaperone protein dnaJ 2 (ATJ2) (Arabidopsis thaliana (Mouse-ear cress)).